Consider the following 67-residue polypeptide: Peptide Hp1239 (67 aa).

The signal sequence occupies residues 1 to 23; the sequence is MKTQFTVLLITLVLFQMLSQSEA. Residue F36 is modified to Phenylalanine amide. A propeptide spanning residues 40-67 is cleaved from the precursor; that stretch reads GLSDLSDLDELFDGEITKADLDLLREIM.

Belongs to the non-disulfide-bridged peptide (NDBP) superfamily. Short antimicrobial peptide (group 4) family. As to expression, expressed by the venom gland.

The protein localises to the secreted. The protein resides in the target cell membrane. Its function is as follows. Amphipathic peptide with antibacterial activities. Shows antiviral activities against the herpes simplex virus type-1. It potently inhibits the initial infection by provoking the rupture of viral envelop and the dissociation of proteins from the virions (EC(50) is 0.41 uM). It also effectively inhibits viral attachment (EC(50) is 5.73 uM), viral entry (EC(50) is 4.32 uM) and viral proliferation after infection (EC(50) is 8.41 uM). Morever, it enters mammalian tested cells (Vero) and reduces the intracellular infectivity. This Heterometrus petersii (Asian forest scorpion) protein is Peptide Hp1239.